A 257-amino-acid polypeptide reads, in one-letter code: uncharacterized protein (257 aa).

The next 6 membrane-spanning stretches (helical) occupy residues Phe5 to Phe25, Leu29 to Ile49, Thr53 to Ile73, Leu146 to Ile166, Ile180 to Trp200, and Val216 to Ile236.

Belongs to the DedA family.

The protein resides in the cell membrane. This is an uncharacterized protein from Buchnera aphidicola subsp. Baizongia pistaciae (strain Bp).